A 362-amino-acid chain; its full sequence is Peptide chain release factor 1 (362 aa).

Gln-237 carries the N5-methylglutamine modification.

The protein belongs to the prokaryotic/mitochondrial release factor family. Methylated by PrmC. Methylation increases the termination efficiency of RF1.

It localises to the cytoplasm. In terms of biological role, peptide chain release factor 1 directs the termination of translation in response to the peptide chain termination codons UAG and UAA. The polypeptide is Peptide chain release factor 1 (prfA) (Aquifex aeolicus (strain VF5)).